Here is a 379-residue protein sequence, read N- to C-terminus: MAWGQGAKRSILGLLFRSQHQTARAYSSSAFQTHQLSTHVPQDGVFIRRFGSEVSSSEQMNLIKQLRQRTSAPIKDVKASLVTCNWDIEAAQKDLRKRGVALAAKKSSRTAAEGLLAIAQDDKRAAVVELNCETDFVARNDVFQYLASSLAKMALSAQGPGELFMPFGPELLENMPINLDHPKLSVETTVQSAVTEVAAMVGENVKLRRGFMLSTTAHGVVSSYMHTCPQPGMGRIAGLVTLETEDSSTLLDSVKSVGSSIAMHIVAAKPLFLSKELVSASALENEREILRTQAQSSGKSQMAMDKMVEGRLRKYFEEVVLMEQKYVLNDSTNIKTVLNDLSKEVGSKVTIGNFIRMEVGEGIERTEAADGLEVAGGAM.

Residues 1–33 (MAWGQGAKRSILGLLFRSQHQTARAYSSSAFQT) constitute a mitochondrion transit peptide.

Belongs to the EF-Ts family.

The protein localises to the mitochondrion. In terms of biological role, associates with the EF-Tu.GDP complex and induces the exchange of GDP to GTP. It remains bound to the aminoacyl-tRNA.EF-Tu.GTP complex up to the GTP hydrolysis stage on the ribosome. In Zea mays (Maize), this protein is Elongation factor Ts, mitochondrial.